The chain runs to 346 residues: D-amino-acid oxidase (346 aa).

FAD-binding residues include Gly22, Ile24, Thr52, Thr53, Ser54, Ala58, Ala59, Leu60, and Thr187. Residues Tyr227 and Arg284 each coordinate D-proline. Residues Tyr227 and Arg284 each coordinate D-serine. The FAD site is built by Arg284, Gly311, Gly312, Gly314, and Thr316. Arg284 is a D-dopa binding site. Position 312 (Gly312) interacts with D-proline. Residue Gly312 coordinates D-serine. Gly312 is a D-dopa binding site. The Microbody targeting signal motif lies at 344–346; sequence SKL.

Belongs to the DAMOX/DASOX family. The cofactor is FAD.

The protein localises to the peroxisome matrix. The catalysed reaction is a D-alpha-amino acid + O2 + H2O = a 2-oxocarboxylate + H2O2 + NH4(+). The enzyme catalyses D-serine + O2 + H2O = 3-hydroxypyruvate + H2O2 + NH4(+). It catalyses the reaction D-phenylalanine + O2 + H2O = 3-phenylpyruvate + H2O2 + NH4(+). It carries out the reaction D-alanine + O2 + H2O = pyruvate + H2O2 + NH4(+). The catalysed reaction is D-arginine + O2 + H2O = 5-guanidino-2-oxopentanoate + H2O2 + NH4(+). The enzyme catalyses D-methionine + O2 + H2O = 4-methylsulfanyl-2-oxobutanoate + H2O2 + NH4(+). It catalyses the reaction D-ornithine + O2 + H2O = 5-amino-2-oxopentanoate + H2O2 + NH4(+). It carries out the reaction D-leucine + O2 + H2O = 4-methyl-2-oxopentanoate + H2O2 + NH4(+). The catalysed reaction is D-lysine + O2 + H2O = 6-amino-2-oxohexanoate + H2O2 + NH4(+). The enzyme catalyses D-proline + O2 = 1-pyrroline-2-carboxylate + H2O2. It catalyses the reaction D-valine + O2 + H2O = 3-methyl-2-oxobutanoate + H2O2 + NH4(+). It carries out the reaction D-histidine + O2 + H2O = 3-(imidazol-5-yl)pyruvate + H2O2 + NH4(+). Functionally, catalyzes the oxidative deamination of D-amino acids with broad substrate specificity. Has low in vitro and no in vivo activity on D-serine; primary D-serine degradation is performed by the D-serine dehydratase dsd. The protein is D-amino-acid oxidase (ddo-1) of Dictyostelium discoideum (Social amoeba).